A 480-amino-acid chain; its full sequence is tRNA (uracil-5-)-methyltransferase homolog B (480 aa).

S-adenosyl-L-methionine is bound by residues glutamine 299, glutamate 349, and asparagine 399. Catalysis depends on cysteine 427, which acts as the Nucleophile. Glutamate 473 acts as the Proton acceptor in catalysis.

Belongs to the class I-like SAM-binding methyltransferase superfamily. RNA M5U methyltransferase family.

It localises to the mitochondrion. It catalyses the reaction uridine(54) in tRNA + S-adenosyl-L-methionine = 5-methyluridine(54) in tRNA + S-adenosyl-L-homocysteine + H(+). It carries out the reaction a uridine in 12S rRNA + S-adenosyl-L-methionine = a 5-methyluridine in 12S rRNA + S-adenosyl-L-homocysteine + H(+). In terms of biological role, mitochondrial S-adenosyl-L-methionine-dependent methyltransferase that catalyzes the formation of 5-methyl-uridine in tRNAs and 12S rRNA. Catalyzes the methylation of uridine at position 54 (m5U54) in all tRNAs. Specifically methylates the uridine in position 429 of 12S rRNA (m5U429). Does not affect RNA stability or mitochondrial translation. In Danio rerio (Zebrafish), this protein is tRNA (uracil-5-)-methyltransferase homolog B (trmt2b).